The sequence spans 377 residues: Nucleosome assembly protein 1;2 (377 aa).

Residues 26–80 adopt a coiled-coil conformation; that stretch reads VNVLKNKLHDLTGKHSNVTESLSPNVRKRVEALREIQTEHDELEAKFFEERAALE. The Nuclear export signal signature appears at 47-62; the sequence is LSPNVRKRVEALREIQ. The Nuclear localization signal motif lies at 223-228; that stretch reads KKKPKK. The tract at residues 298–377 is disordered; it reads EAAEDDYAEL…GERPPECKQQ (80 aa). The segment covering 299–342 has biased composition (acidic residues); sequence AAEDDYAELEDDEDEDDDEEDDEDEDEEEEDEEDDEDEEEDEDE. C374 bears the Cysteine methyl ester mark. C374 carries the S-farnesyl cysteine lipid modification. Residues 375-377 constitute a propeptide, removed in mature form; the sequence is KQQ.

It belongs to the nucleosome assembly protein (NAP) family. In terms of assembly, binds preferentially histone H1 in vitro. Interacts with CYCB1;1.

The protein resides in the nucleus. It is found in the cytoplasm. In terms of biological role, may modulate chromatin structure by regulation of nucleosome assembly/disassembly. Could function together with B-type cyclins in the regulation of microtubule dynamics. This is Nucleosome assembly protein 1;2 (NAP1;2) from Nicotiana tabacum (Common tobacco).